The sequence spans 115 residues: Flagellar transcriptional regulator FlhD (115 aa).

This sequence belongs to the FlhD family. In terms of assembly, homodimer; disulfide-linked. Forms a heterohexamer composed of two FlhC and four FlhD subunits. Each FlhC binds a FlhD dimer, forming a heterotrimer, and a hexamer assembles by dimerization of two heterotrimers.

It localises to the cytoplasm. Functions in complex with FlhC as a master transcriptional regulator that regulates transcription of several flagellar and non-flagellar operons by binding to their promoter region. Activates expression of class 2 flagellar genes, including fliA, which is a flagellum-specific sigma factor that turns on the class 3 genes. Also regulates genes whose products function in a variety of physiological pathways. This Edwardsiella ictaluri (strain 93-146) protein is Flagellar transcriptional regulator FlhD.